The following is a 513-amino-acid chain: Butyrophilin subfamily 3 member A1 (513 aa).

The signal sequence occupies residues 1 to 29; it reads MKMASFLAFLLLNFRVCLLLLQLLMPHSA. 2 consecutive Ig-like V-type domains span residues 30 to 139 and 145 to 236; these read QFSV…KALV and ALGS…ASIS. The Extracellular portion of the chain corresponds to 30–254; that stretch reads QFSVLGPSGP…AQRWIAALAG (225 aa). 2 disulfide bridges follow: Cys52-Cys126 and Cys166-Cys220. Residue Asn115 is glycosylated (N-linked (GlcNAc...) asparagine). The helical transmembrane segment at 255-271 threads the bilayer; the sequence is TLPVLLLLLGGAGYFLW. Residues 272 to 513 lie on the Cytoplasmic side of the membrane; that stretch reads QQQEEKKTQF…EPTALTICPA (242 aa). The 192-residue stretch at 322–513 folds into the B30.2/SPRY domain; that stretch reads RGERHSAYNE…EPTALTICPA (192 aa).

It belongs to the immunoglobulin superfamily. BTN/MOG family. As to quaternary structure, homodimer. Post-translationally, N-glycosylated. Detected on T-cells, natural killer cells, dendritic cells and macrophages (at protein level). Ubiquitous. Highly expressed in heart, pancreas and lung, Moderately expressed in placenta, liver and muscle.

The protein resides in the cell membrane. Its function is as follows. Plays a role in T-cell activation and in the adaptive immune response. Regulates the proliferation of activated T-cells. Regulates the release of cytokines and IFNG by activated T-cells. Mediates the response of T-cells toward infected and transformed cells that are characterized by high levels of phosphorylated metabolites, such as isopentenyl pyrophosphate. The sequence is that of Butyrophilin subfamily 3 member A1 (BTN3A1) from Homo sapiens (Human).